The chain runs to 637 residues: tRNA 5-methylaminomethyl-2-thiouridine biosynthesis bifunctional protein MnmC (637 aa).

Positions 1-231 (MPIDPARLAF…KRQMCRGRHR (231 aa)) are tRNA (mnm(5)s(2)U34)-methyltransferase. An FAD-dependent cmnm(5)s(2)U34 oxidoreductase region spans residues 250 to 637 (IGAGLAGSST…RPARGMTREG (388 aa)).

This sequence in the N-terminal section; belongs to the methyltransferase superfamily. tRNA (mnm(5)s(2)U34)-methyltransferase family. The protein in the C-terminal section; belongs to the DAO family. It depends on FAD as a cofactor.

The protein localises to the cytoplasm. The catalysed reaction is 5-aminomethyl-2-thiouridine(34) in tRNA + S-adenosyl-L-methionine = 5-methylaminomethyl-2-thiouridine(34) in tRNA + S-adenosyl-L-homocysteine + H(+). Its function is as follows. Catalyzes the last two steps in the biosynthesis of 5-methylaminomethyl-2-thiouridine (mnm(5)s(2)U) at the wobble position (U34) in tRNA. Catalyzes the FAD-dependent demodification of cmnm(5)s(2)U34 to nm(5)s(2)U34, followed by the transfer of a methyl group from S-adenosyl-L-methionine to nm(5)s(2)U34, to form mnm(5)s(2)U34. This is tRNA 5-methylaminomethyl-2-thiouridine biosynthesis bifunctional protein MnmC from Aromatoleum aromaticum (strain DSM 19018 / LMG 30748 / EbN1) (Azoarcus sp. (strain EbN1)).